A 108-amino-acid polypeptide reads, in one-letter code: Large ribosomal subunit protein uL24 (108 aa).

Belongs to the universal ribosomal protein uL24 family. In terms of assembly, part of the 50S ribosomal subunit.

Its function is as follows. One of two assembly initiator proteins, it binds directly to the 5'-end of the 23S rRNA, where it nucleates assembly of the 50S subunit. In terms of biological role, one of the proteins that surrounds the polypeptide exit tunnel on the outside of the subunit. The polypeptide is Large ribosomal subunit protein uL24 (Mycoplasmopsis pulmonis (strain UAB CTIP) (Mycoplasma pulmonis)).